The chain runs to 79 residues: MSNQFNAGDTVYVIYRNPHAANVAHIKEAEIVHHPYHEGELSLFIYETYHPFAEDDAVFASYEEAKSLYKELFDIDPYE.

Regulator of the spore photoproduct lyase operon (splAB). In Bacillus subtilis (strain 168), this protein is Transcriptional regulator SplA (splA).